A 213-amino-acid chain; its full sequence is A-type ATP synthase subunit D (213 aa).

It belongs to the V-ATPase D subunit family. In terms of assembly, has multiple subunits with at least A(3), B(3), C, D, E, F, H, I and proteolipid K(x).

The protein resides in the cell membrane. Functionally, component of the A-type ATP synthase that produces ATP from ADP in the presence of a proton gradient across the membrane. The sequence is that of A-type ATP synthase subunit D from Saccharolobus islandicus (strain L.S.2.15 / Lassen #1) (Sulfolobus islandicus).